We begin with the raw amino-acid sequence, 739 residues long: Adenosylcobalamin-dependent ribonucleoside-triphosphate reductase (739 aa).

Cysteine 119 and cysteine 419 are oxidised to a cystine. The effector region-1 stretch occupies residues 147–158; that stretch reads SMPFSFLFDELM. Residues 168 to 313 are effector region-2; the sequence is ARSNISQIPR…ICNLIGKAVV (146 aa). Active-site residues include cysteine 408 and glutamate 410. An adenosylcobalamin-binding-1 region spans residues 565–626; it reads FHYGAYLIQR…NPNFASAGTV (62 aa). The segment at 685-724 is adenosylcobalamin-binding-2; it reads LQQAPKEPIDKETYEKRSQEITGNVEEVFSQLNSDVKDLE.

Belongs to the class II ribonucleoside-triphosphate reductase family. Monomer. Adenosylcob(III)alamin is required as a cofactor.

It catalyses the reaction a 2'-deoxyribonucleoside 5'-triphosphate + [thioredoxin]-disulfide + H2O = a ribonucleoside 5'-triphosphate + [thioredoxin]-dithiol. With respect to regulation, allosterically regulated by ATP and dNTP. This is Adenosylcobalamin-dependent ribonucleoside-triphosphate reductase (rtpR) from Lactobacillus delbrueckii subsp. bulgaricus (strain ATCC 11842 / DSM 20081 / BCRC 10696 / JCM 1002 / NBRC 13953 / NCIMB 11778 / NCTC 12712 / WDCM 00102 / Lb 14).